We begin with the raw amino-acid sequence, 554 residues long: Polyamine aminopropyltransferase 2 (554 aa).

The span at 1-13 (MIEPHAPAPPGSP) shows a compositional bias: pro residues. The disordered stretch occupies residues 1–20 (MIEPHAPAPPGSPPSWGGPC). 6 helical membrane passes run 37 to 57 (FLVL…ELEL), 69 to 89 (VTQA…GSLA), 106 to 126 (AALA…FAWT), 139 to 159 (ILLV…VPLL), 184 to 204 (VGAL…LGQL), and 206 to 226 (GALL…LGLF). The spermidine synthase stretch occupies residues 235-516 (RWLLLTANAV…RTAPAPRLDP (282 aa)). A PABS domain is found at 247 to 492 (ALLATATVLA…SVPGPRRAAA (246 aa)). Gln281 contributes to the S-methyl-5'-thioadenosine binding site. His313 and Asp335 together coordinate spermidine. Residues Glu355 and 389–390 (DA) contribute to the S-methyl-5'-thioadenosine site. Asp408 acts as the Proton acceptor in catalysis. The disordered stretch occupies residues 476-495 (DTGPGPGSVPGPRRAAAGPP). A compositionally biased stretch (low complexity) spans 485–495 (PGPRRAAAGPP).

Belongs to the spermidine/spermine synthase family. Homodimer or homotetramer.

The protein localises to the cell membrane. The catalysed reaction is S-adenosyl 3-(methylsulfanyl)propylamine + putrescine = S-methyl-5'-thioadenosine + spermidine + H(+). It functions in the pathway amine and polyamine biosynthesis; spermidine biosynthesis; spermidine from putrescine: step 1/1. Its function is as follows. Catalyzes the irreversible transfer of a propylamine group from the amino donor S-adenosylmethioninamine (decarboxy-AdoMet) to putrescine (1,4-diaminobutane) to yield spermidine. The polypeptide is Polyamine aminopropyltransferase 2 (Streptomyces coelicolor (strain ATCC BAA-471 / A3(2) / M145)).